The primary structure comprises 413 residues: Clusterin-associated protein 1 (413 aa).

Residues 198 to 291 (KTKDLLNNVA…ERFEEAKNTL (94 aa)) are a coiled coil. A disordered region spans residues 305 to 413 (LLKSGSNDDS…EPLDESDNDF (109 aa)). Composition is skewed to acidic residues over residues 312-328 (DDSDIDIQEDDESDSEL) and 360-388 (DSDDNEDSEESEIDMEDDDDEDDDLEDES). 3 positions are modified to phosphoserine: Ser314, Ser324, and Ser326. Position 409 is a phosphoserine (Ser409).

Belongs to the CLUAP1 family. Interacts with CLU/clusterin. Interacts with UBXN10; the interaction is direct. As to expression, expressed in testis, thyroid and trachea and to a lower extent in spinal cord and adrenal gland. Highly expressed in colon cancer and osteosarcoma cell lines.

Its subcellular location is the cell projection. It localises to the cilium. The protein localises to the nucleus. Its function is as follows. Required for cilia biogenesis. Appears to function within the multiple intraflagellar transport complex B (IFT-B). Key regulator of hedgehog signaling. This is Clusterin-associated protein 1 (CLUAP1) from Homo sapiens (Human).